A 77-amino-acid chain; its full sequence is Cold shock protein YdfK (77 aa).

The protein to E.coli YnaE.

The polypeptide is Cold shock protein YdfK (ydfK) (Escherichia coli (strain K12)).